A 794-amino-acid polypeptide reads, in one-letter code: 6-hydroxypseudooxynicotine dehydrogenase complex subunit gamma (794 aa).

As to quaternary structure, heterohexamer of 2 alpha (kdhA), 2 beta (kdhB) and 2 gamma (kdhC) subunit. Dimer of heterotrimers. Requires Mo-molybdopterin cytosine dinucleotide as cofactor.

It catalyses the reaction 6-hydroxypseudooxynicotine + A + H2O = 2,6-dihydroxypseudooxynicotine + AH2. It participates in alkaloid degradation; nicotine degradation. Molybdo-flavoprotein enzyme complex involved in nicotine degradation. The subunit gamma (large subunit) contains the substrate-binding sites, the subunit alpha (medium subunit) binds FAD and the subunit beta (small subunit) has a 2Fe-2S ferredoxin-type domain which binds 2 2Fe-2S clusters. The polypeptide is 6-hydroxypseudooxynicotine dehydrogenase complex subunit gamma (kdhC) (Paenarthrobacter nicotinovorans (Arthrobacter nicotinovorans)).